Consider the following 519-residue polypeptide: Importin subunit alpha-9 (519 aa).

The segment at 1-29 (MADDGSASNRRDPIKSSVGNVAGQRRRKQ) is disordered. ARM repeat units lie at residues 116 to 156 (FPPV…NIAA), 158 to 197 (KPEETKALLPALPLLIAHLGEKSSAPVAEQCAWAIGNVAG), 200 to 239 (EDLRNVLLSQGALPPLARMIFPDKGSTVRTAAWALSNLIK), 244 to 283 (KAAAQLVKIDGILDAILRHLKKTDEETATEIAWIIVYLSA), 286 to 326 (DIAT…NFVA), 335 to 374 (ILIREQNTEESIIGVLAKCLRSEHRVLKKEAAWVLSNIAA), 377 to 416 (IEHKRMIHSTEVMPLLLRILSTSPFDIRKEVAYVLGNLCV), and 429 to 468 (QEHLVSIVSGGCLRGFIELVRSPDIEAARLGLQFIELVLR).

The protein belongs to the importin alpha family. In terms of assembly, forms a complex with importin subunit beta-1.

The protein resides in the nucleus envelope. Functionally, binds to conventional NLS motifs and mediates nuclear protein import across the nuclear envelope. Acts as a cellular receptor for the nuclear import of the virD2 protein of Agrobacterium, but is not essential for Agrobacterium-mediated root transformation. The chain is Importin subunit alpha-9 from Arabidopsis thaliana (Mouse-ear cress).